A 149-amino-acid polypeptide reads, in one-letter code: uncharacterized protein (149 aa).

Positions 1–103 (MFGLKVKNAE…SPTQGSRLRH (103 aa)) are disordered. The segment covering 7–18 (KNAEADTAKSNE) has biased composition (basic and acidic residues). The segment covering 26 to 41 (TGSSTTSGSGQSTQRG) has biased composition (low complexity). The segment covering 61 to 72 (GSQGNSGDQGTE) has biased composition (polar residues).

Belongs to the adhesin P1 family.

This is an uncharacterized protein from Mycoplasma pneumoniae (strain ATCC 29342 / M129 / Subtype 1) (Mycoplasmoides pneumoniae).